Here is a 273-residue protein sequence, read N- to C-terminus: MHEAQIRVAIAGAGGRMGRQLIQAAMAMEGVQLGAALEREGSSLLGSDAGELAGAGKSGVIVQSSLEAVKDDFDVFIDFTRPEGTLTHLAFCRQHGKGMVIGTTGFDDAGKQAIREASQEIAIVFAANFSVGVNVMLKLLEKAAKVMGYYSDIEIIEAHHRHKVDAPSGTALEMGEAIAGALDKNLKDCAVYSREGYTGERVPGTIGFATVRAGDIVGEHTAMFADIGERVEITHKASSRMTFANGALRAALWLKTKKNGLFDMRDVLGLDVL.

NAD(+) is bound by residues 12 to 17 (GAGGRM) and Glu38. Arg39 contributes to the NADP(+) binding site. Residues 102 to 104 (GTT) and 126 to 129 (AANF) contribute to the NAD(+) site. Residue His159 is the Proton donor/acceptor of the active site. Residue His160 participates in (S)-2,3,4,5-tetrahydrodipicolinate binding. The active-site Proton donor is the Lys163. 169–170 (GT) contributes to the (S)-2,3,4,5-tetrahydrodipicolinate binding site.

Belongs to the DapB family. As to quaternary structure, homotetramer.

Its subcellular location is the cytoplasm. The enzyme catalyses (S)-2,3,4,5-tetrahydrodipicolinate + NAD(+) + H2O = (2S,4S)-4-hydroxy-2,3,4,5-tetrahydrodipicolinate + NADH + H(+). The catalysed reaction is (S)-2,3,4,5-tetrahydrodipicolinate + NADP(+) + H2O = (2S,4S)-4-hydroxy-2,3,4,5-tetrahydrodipicolinate + NADPH + H(+). The protein operates within amino-acid biosynthesis; L-lysine biosynthesis via DAP pathway; (S)-tetrahydrodipicolinate from L-aspartate: step 4/4. In terms of biological role, catalyzes the conversion of 4-hydroxy-tetrahydrodipicolinate (HTPA) to tetrahydrodipicolinate. This is 4-hydroxy-tetrahydrodipicolinate reductase from Salmonella paratyphi A (strain ATCC 9150 / SARB42).